The following is a 724-amino-acid chain: Probable ATP-dependent RNA helicase DDX4 (724 aa).

Residues 1–11 (MSGQEDWESEI) are compositionally biased toward acidic residues. 2 disordered regions span residues 1–25 (MSGQEDWESEIDNPPACVPNLSNSE) and 37–241 (SSNN…QGPR). Positions 108–130 (SNGKQESGDFTNDDNRTIDDNRR) are enriched in basic and acidic residues. A compositionally biased stretch (polar residues) spans 168 to 182 (EQSGFTSNDGFNNET). A Q motif motif is present at residues 286-314 (LTFEEANLCDSLAKNVCKSGYVKLTPIQK). In terms of domain architecture, Helicase ATP-binding spans 317–500 (IPIIVAGRDL…REILKPDYLF (184 aa)). Residue 330 to 337 (AQTGSGKT) coordinates ATP. The short motif at 444–447 (DEAD) is the DEAD box element. The 164-residue stretch at 512–675 (DVEQMVIEVD…EVPAWLEEVA (164 aa)) folds into the Helicase C-terminal domain. The segment covering 683–692 (AYNPRSNKFA) has biased composition (polar residues). The disordered stretch occupies residues 683–724 (AYNPRSNKFASTDDRKRGDSRGDYSTSGFSPSAAQAEEEDWG). Residues 693 to 704 (STDDRKRGDSRG) show a composition bias toward basic and acidic residues. Over residues 705-715 (DYSTSGFSPSA) the composition is skewed to polar residues.

The protein belongs to the DEAD box helicase family. DDX4/VASA subfamily.

The protein localises to the cytoplasm. The catalysed reaction is ATP + H2O = ADP + phosphate + H(+). In terms of biological role, probable ATP-dependent RNA helicase required during spermatogenesis to repress transposable elements and preventing their mobilization, which is essential for the germline integrity. Acts via the piRNA metabolic process, which mediates the repression of transposable elements during meiosis by forming complexes composed of piRNAs and Piwi proteins and governs the methylation and subsequent repression of transposons. Involved in the secondary piRNAs metabolic process, the production of piRNAs in fetal male germ cells through a ping-pong amplification cycle. The chain is Probable ATP-dependent RNA helicase DDX4 from Pelophylax lessonae (Pool frog).